A 211-amino-acid chain; its full sequence is 2,3-bisphosphoglycerate-dependent phosphoglycerate mutase (211 aa).

Substrate is bound by residues 9-16 (RHGQSDWN), 22-23 (TG), Arg61, 88-91 (ERDY), Lys99, 115-116 (RR), and 159-160 (GN). His10 serves as the catalytic Tele-phosphohistidine intermediate. The active-site Proton donor/acceptor is Glu88.

This sequence belongs to the phosphoglycerate mutase family. BPG-dependent PGAM subfamily. In terms of assembly, homodimer.

The catalysed reaction is (2R)-2-phosphoglycerate = (2R)-3-phosphoglycerate. Its pathway is carbohydrate degradation; glycolysis; pyruvate from D-glyceraldehyde 3-phosphate: step 3/5. In terms of biological role, catalyzes the interconversion of 2-phosphoglycerate and 3-phosphoglycerate. This is 2,3-bisphosphoglycerate-dependent phosphoglycerate mutase from Allorhizobium ampelinum (strain ATCC BAA-846 / DSM 112012 / S4) (Agrobacterium vitis (strain S4)).